Consider the following 436-residue polypeptide: Xylose isomerase (436 aa).

Catalysis depends on residues His100 and Asp103. Positions 231, 267, 270, 295, 306, 308, and 338 each coordinate Mg(2+).

The protein belongs to the xylose isomerase family. In terms of assembly, homotetramer. Mg(2+) is required as a cofactor.

The protein localises to the cytoplasm. The enzyme catalyses alpha-D-xylose = alpha-D-xylulofuranose. The polypeptide is Xylose isomerase (Rhizobium etli (strain ATCC 51251 / DSM 11541 / JCM 21823 / NBRC 15573 / CFN 42)).